The following is a 138-amino-acid chain: Large ribosomal subunit protein mL43 (138 aa).

Belongs to the mitochondrion-specific ribosomal protein mL43 family. In terms of assembly, component of the mitochondrial large ribosomal subunit (mt-LSU). Mature N.crassa 74S mitochondrial ribosomes consist of a small (37S) and a large (54S) subunit. The 37S small subunit contains a 16S ribosomal RNA (16S mt-rRNA) and 32 different proteins. The 54S large subunit contains a 23S rRNA (23S mt-rRNA) and 42 different proteins.

Its subcellular location is the mitochondrion. Functionally, component of the mitochondrial ribosome (mitoribosome), a dedicated translation machinery responsible for the synthesis of mitochondrial genome-encoded proteins, including at least some of the essential transmembrane subunits of the mitochondrial respiratory chain. The mitoribosomes are attached to the mitochondrial inner membrane and translation products are cotranslationally integrated into the membrane. The polypeptide is Large ribosomal subunit protein mL43 (mrpl51) (Neurospora crassa (strain ATCC 24698 / 74-OR23-1A / CBS 708.71 / DSM 1257 / FGSC 987)).